The sequence spans 249 residues: O-methyltransferase adaD (249 aa).

Over residues 1-15 (MSSVTLTTTTTTTST) the composition is skewed to low complexity. Residues 1–26 (MSSVTLTTTTTTTSTPPKPTPKDEPQ) are disordered.

This sequence belongs to the methyltransferase superfamily.

The catalysed reaction is 2-acetyl-3,4a,8,10,11,12a-hexahydroxy-1,4,4a,5,12,12a-hexahydrotetracene-1,12-dione + S-adenosyl-L-methionine = TAN-1612 + S-adenosyl-L-homocysteine + H(+). Its pathway is secondary metabolite biosynthesis. Its function is as follows. O-methyltransferase; part of the gene cluster that mediates the biosynthesis of the linear tetracyclic TAN-1612 neuropeptide Y receptor antagonist. The decaketide backbone of TAN-1612 is synthesized by the non-reducing polyketide synthase adaA via condensation of one acetyl-CoA starter unit with 9 malonyl-CoA units. The FAD-dependent monooxygenase adaC then performs hydroxylation at C2 while the polaketide chain is still attached to the NRPKS adaA. The alpha-hydroxylation step at C2 appears to be crucial for the following C18-C1 Claisen cyclization and release of the C9-hydroxyl version of TAN-1612 from the NRPKS adaA, two steps performed by the lactamase-like protein adaB. Finally, the O-methyltransferase adaD performs the C9 O-methylation to complete the biosynthesis of TAN-1612. The sequence is that of O-methyltransferase adaD from Aspergillus niger (strain ATCC MYA-4892 / CBS 513.88 / FGSC A1513).